The primary structure comprises 39 residues: Adipokinetic prohormone type 2 (39 aa).

Glutamine 1 is subject to Pyrrolidone carboxylic acid. A Tryptophan amide modification is found at tryptophan 8.

Belongs to the AKH/HRTH/RPCH family. As to quaternary structure, adipokinetic hormone precursor-related peptide (APRP) can form three type of disulfide-bond dimers: p1 (alpha-alpha), p2 (alpha-beta), and p3 (beta-beta).

The protein resides in the secreted. In terms of biological role, this hormone, released from cells in the corpora cardiaca, causes release of diglycerides from the fat body and stimulation of muscles to use these diglycerides as an energy source during energy-demanding processes. The protein is Adipokinetic prohormone type 2 of Schistocerca gregaria (Desert locust).